The primary structure comprises 291 residues: 4-hydroxy-tetrahydrodipicolinate synthase (291 aa).

Thr-45 lines the pyruvate pocket. Tyr-131 acts as the Proton donor/acceptor in catalysis. Lys-159 (schiff-base intermediate with substrate) is an active-site residue. Ile-202 provides a ligand contact to pyruvate.

This sequence belongs to the DapA family. As to quaternary structure, homotetramer; dimer of dimers.

It localises to the cytoplasm. The enzyme catalyses L-aspartate 4-semialdehyde + pyruvate = (2S,4S)-4-hydroxy-2,3,4,5-tetrahydrodipicolinate + H2O + H(+). It functions in the pathway amino-acid biosynthesis; L-lysine biosynthesis via DAP pathway; (S)-tetrahydrodipicolinate from L-aspartate: step 3/4. Catalyzes the condensation of (S)-aspartate-beta-semialdehyde [(S)-ASA] and pyruvate to 4-hydroxy-tetrahydrodipicolinate (HTPA). The chain is 4-hydroxy-tetrahydrodipicolinate synthase from Methanosarcina acetivorans (strain ATCC 35395 / DSM 2834 / JCM 12185 / C2A).